The primary structure comprises 495 residues: Catalase B (495 aa).

Residues 1 to 25 are disordered; the sequence is MSNNKKLTSLFGAPVSDRENSMTAG. Active-site residues include His55 and Asn128. Tyr338 is a heme binding site.

This sequence belongs to the catalase family. In terms of assembly, homodimer. Requires heme as cofactor.

The enzyme catalyses 2 H2O2 = O2 + 2 H2O. Decomposes hydrogen peroxide into water and oxygen; serves to protect cells from the toxic effects of hydrogen peroxide. The chain is Catalase B (katB) from Staphylococcus xylosus.